The chain runs to 174 residues: NADH-quinone oxidoreductase subunit B 2 (174 aa).

Cys-38, Cys-39, Cys-104, and Cys-133 together coordinate [4Fe-4S] cluster.

This sequence belongs to the complex I 20 kDa subunit family. As to quaternary structure, NDH-1 is composed of 14 different subunits. Subunits NuoB, C, D, E, F, and G constitute the peripheral sector of the complex. Requires [4Fe-4S] cluster as cofactor.

It localises to the cell membrane. It carries out the reaction a quinone + NADH + 5 H(+)(in) = a quinol + NAD(+) + 4 H(+)(out). In terms of biological role, NDH-1 shuttles electrons from NADH, via FMN and iron-sulfur (Fe-S) centers, to quinones in the respiratory chain. The immediate electron acceptor for the enzyme in this species is believed to be ubiquinone. Couples the redox reaction to proton translocation (for every two electrons transferred, four hydrogen ions are translocated across the cytoplasmic membrane), and thus conserves the redox energy in a proton gradient. The polypeptide is NADH-quinone oxidoreductase subunit B 2 (Chloroflexus aurantiacus (strain ATCC 29366 / DSM 635 / J-10-fl)).